The sequence spans 315 residues: DNA-directed RNA polymerase subunit alpha (315 aa).

The interval 1–228 (MIEMEKPKVE…EHLNLFITLK (228 aa)) is alpha N-terminal domain (alpha-NTD). Residues 245–315 (KEKVLEMTIE…LGLGLRPSDE (71 aa)) form an alpha C-terminal domain (alpha-CTD) region.

Belongs to the RNA polymerase alpha chain family. In terms of assembly, homodimer. The RNAP catalytic core consists of 2 alpha, 1 beta, 1 beta' and 1 omega subunit. When a sigma factor is associated with the core the holoenzyme is formed, which can initiate transcription.

The catalysed reaction is RNA(n) + a ribonucleoside 5'-triphosphate = RNA(n+1) + diphosphate. Its function is as follows. DNA-dependent RNA polymerase catalyzes the transcription of DNA into RNA using the four ribonucleoside triphosphates as substrates. This chain is DNA-directed RNA polymerase subunit alpha, found in Alkaliphilus metalliredigens (strain QYMF).